Consider the following 476-residue polypeptide: Proline--tRNA ligase 2 (476 aa).

This sequence belongs to the class-II aminoacyl-tRNA synthetase family. ProS type 3 subfamily. As to quaternary structure, homodimer.

The protein resides in the cytoplasm. The enzyme catalyses tRNA(Pro) + L-proline + ATP = L-prolyl-tRNA(Pro) + AMP + diphosphate. Catalyzes the attachment of proline to tRNA(Pro) in a two-step reaction: proline is first activated by ATP to form Pro-AMP and then transferred to the acceptor end of tRNA(Pro). In Bacillus cereus (strain ATCC 14579 / DSM 31 / CCUG 7414 / JCM 2152 / NBRC 15305 / NCIMB 9373 / NCTC 2599 / NRRL B-3711), this protein is Proline--tRNA ligase 2.